The sequence spans 237 residues: Ribonuclease PH (237 aa).

Phosphate contacts are provided by residues Arg-86 and 124–126 (GTR).

It belongs to the RNase PH family. Homohexameric ring arranged as a trimer of dimers.

The catalysed reaction is tRNA(n+1) + phosphate = tRNA(n) + a ribonucleoside 5'-diphosphate. Functionally, phosphorolytic 3'-5' exoribonuclease that plays an important role in tRNA 3'-end maturation. Removes nucleotide residues following the 3'-CCA terminus of tRNAs; can also add nucleotides to the ends of RNA molecules by using nucleoside diphosphates as substrates, but this may not be physiologically important. Probably plays a role in initiation of 16S rRNA degradation (leading to ribosome degradation) during starvation. The chain is Ribonuclease PH from Shewanella sediminis (strain HAW-EB3).